Reading from the N-terminus, the 104-residue chain is Putative protein 22K (104 aa).

Residues 35 to 104 (YKQLEKELGE…KAPAAKAPSK (70 aa)) are disordered. Residues 60–78 (PLSEGELEEISEEEEEEGE) show a composition bias toward acidic residues. Residues 94–104 (SKAPAAKAPSK) show a composition bias toward low complexity.

The chain is Putative protein 22K from Snake adenovirus serotype 1 (SnAdV-1).